A 226-amino-acid polypeptide reads, in one-letter code: 3-dehydroquinate dehydratase (226 aa).

3-dehydroquinate contacts are provided by residues 30–32 and R62; that span reads EWR. H118 (proton donor/acceptor) is an active-site residue. K143 serves as the catalytic Schiff-base intermediate with substrate. 3-dehydroquinate-binding residues include R186, S205, and Q209.

Belongs to the type-I 3-dehydroquinase family. Homodimer.

The enzyme catalyses 3-dehydroquinate = 3-dehydroshikimate + H2O. Its pathway is metabolic intermediate biosynthesis; chorismate biosynthesis; chorismate from D-erythrose 4-phosphate and phosphoenolpyruvate: step 3/7. Functionally, involved in the third step of the chorismate pathway, which leads to the biosynthesis of aromatic amino acids. Catalyzes the cis-dehydration of 3-dehydroquinate (DHQ) and introduces the first double bond of the aromatic ring to yield 3-dehydroshikimate. The chain is 3-dehydroquinate dehydratase from Streptococcus equi subsp. zooepidemicus (strain H70).